The primary structure comprises 222 residues: MELTLHEARVIGCLLEKEVTTPEQYPLSLNALTLACNQKTSREPVLELTEAQVQDALDSLNKKRLISEQSGFGSRVVKYKHRFCNTEFSELQLSTAAVAIVCLLLLRGPQTPGELRTRSNRLHDFKDVLEVEACIKQLMERDKPVLTQLPREPGKRECRYTELFSQGSEQVSATSLSADSPSADSNSLNAQDRQQLEARVTQLEGQVAELKDKLESLIASLS.

Polar residues predominate over residues 169–193 (EQVSATSLSADSPSADSNSLNAQDR). The interval 169–195 (EQVSATSLSADSPSADSNSLNAQDRQQ) is disordered.

Belongs to the UPF0502 family.

In Shewanella oneidensis (strain ATCC 700550 / JCM 31522 / CIP 106686 / LMG 19005 / NCIMB 14063 / MR-1), this protein is UPF0502 protein SO_1867.